The following is a 311-amino-acid chain: Probable manganese-dependent inorganic pyrophosphatase (311 aa).

Residues histidine 9, aspartate 13, aspartate 15, aspartate 75, histidine 97, and aspartate 149 each contribute to the Mn(2+) site.

Belongs to the PPase class C family. Mn(2+) is required as a cofactor.

The protein localises to the cytoplasm. The enzyme catalyses diphosphate + H2O = 2 phosphate + H(+). The polypeptide is Probable manganese-dependent inorganic pyrophosphatase (Shouchella clausii (strain KSM-K16) (Alkalihalobacillus clausii)).